Consider the following 152-residue polypeptide: UPF0178 protein YaiI (152 aa).

This sequence belongs to the UPF0178 family.

This Escherichia coli O6:K15:H31 (strain 536 / UPEC) protein is UPF0178 protein YaiI.